The primary structure comprises 437 residues: Dolichyl-diphosphooligosaccharide--protein glycosyltransferase 48 kDa subunit (437 aa).

A signal peptide spans 1–24; that stretch reads MASLRVSVLLVAASCLLLGSGLRA. The Lumenal segment spans residues 25–407; the sequence is GPRTLVLLEN…QYERFIPSAY (383 aa). The chain crosses the membrane as a helical span at residues 408–428; sequence PYYASAFSVMFGLFIFSIVFL. The Cytoplasmic portion of the chain corresponds to 429–437; the sequence is HMKEKEKSD.

The protein belongs to the DDOST 48 kDa subunit family. As to quaternary structure, component of the oligosaccharyltransferase (OST) complex.

Its subcellular location is the endoplasmic reticulum membrane. The protein operates within protein modification; protein glycosylation. Its function is as follows. Subunit of the oligosaccharyl transferase (OST) complex that catalyzes the initial transfer of a defined glycan (Glc(3)Man(9)GlcNAc(2) in eukaryotes) from the lipid carrier dolichol-pyrophosphate to an asparagine residue within an Asn-X-Ser/Thr consensus motif in nascent polypeptide chains, the first step in protein N-glycosylation. N-glycosylation occurs cotranslationally and the complex associates with the Sec61 complex at the channel-forming translocon complex that mediates protein translocation across the endoplasmic reticulum (ER). All subunits are required for a maximal enzyme activity. Required for the assembly of both SST3A- and SS3B-containing OST complexes. This chain is Dolichyl-diphosphooligosaccharide--protein glycosyltransferase 48 kDa subunit, found in Xenopus tropicalis (Western clawed frog).